Consider the following 62-residue polypeptide: Large ribosomal subunit protein bL33 (62 aa).

This sequence belongs to the bacterial ribosomal protein bL33 family.

In Phocaeicola vulgatus (strain ATCC 8482 / DSM 1447 / JCM 5826 / CCUG 4940 / NBRC 14291 / NCTC 11154) (Bacteroides vulgatus), this protein is Large ribosomal subunit protein bL33.